Here is a 106-residue protein sequence, read N- to C-terminus: Tubulin-specific chaperone A (106 aa).

Position 94 is a phosphoserine (Ser-94).

Belongs to the TBCA family.

It localises to the cytoplasm. The protein resides in the cytoskeleton. Its function is as follows. Tubulin-folding protein; involved in the early step of the tubulin folding pathway. The protein is Tubulin-specific chaperone A (RBL2) of Saccharomyces cerevisiae (strain ATCC 204508 / S288c) (Baker's yeast).